The following is a 331-amino-acid chain: Ketol-acid reductoisomerase (NADP(+)) (331 aa).

Residues 2–182 (AQLFYDSDAD…GGTRAGILET (181 aa)) form the KARI N-terminal Rossmann domain. NADP(+)-binding positions include 25–28 (YGSQ), Ser-51, Ser-53, and 83–86 (DEFQ). The active site involves His-108. Gly-134 serves as a coordination point for NADP(+). Positions 183–328 (NFKEETETDL…KGLRAMFSWL (146 aa)) constitute a KARI C-terminal knotted domain. Mg(2+) contacts are provided by Asp-191, Glu-195, Glu-227, and Glu-231. Ser-252 is a substrate binding site.

The protein belongs to the ketol-acid reductoisomerase family. Mg(2+) serves as cofactor.

It catalyses the reaction (2R)-2,3-dihydroxy-3-methylbutanoate + NADP(+) = (2S)-2-acetolactate + NADPH + H(+). The catalysed reaction is (2R,3R)-2,3-dihydroxy-3-methylpentanoate + NADP(+) = (S)-2-ethyl-2-hydroxy-3-oxobutanoate + NADPH + H(+). Its pathway is amino-acid biosynthesis; L-isoleucine biosynthesis; L-isoleucine from 2-oxobutanoate: step 2/4. It functions in the pathway amino-acid biosynthesis; L-valine biosynthesis; L-valine from pyruvate: step 2/4. Its function is as follows. Involved in the biosynthesis of branched-chain amino acids (BCAA). Catalyzes an alkyl-migration followed by a ketol-acid reduction of (S)-2-acetolactate (S2AL) to yield (R)-2,3-dihydroxy-isovalerate. In the isomerase reaction, S2AL is rearranged via a Mg-dependent methyl migration to produce 3-hydroxy-3-methyl-2-ketobutyrate (HMKB). In the reductase reaction, this 2-ketoacid undergoes a metal-dependent reduction by NADPH to yield (R)-2,3-dihydroxy-isovalerate. The protein is Ketol-acid reductoisomerase (NADP(+)) of Prochlorococcus marinus (strain MIT 9313).